Reading from the N-terminus, the 260-residue chain is Oxidoreductase macE (260 aa).

Belongs to the oxidoreductase OpS7 family.

The protein operates within secondary metabolite biosynthesis; terpenoid biosynthesis. Its function is as follows. Oxidoreductase; part of the gene cluster that mediates the biosynthesis of macrophorins, isoprenoid epoxycyclohexenones containing cyclized drimane moieties. The first step of the pathway is the synthesis of 6-methylsalicylic acid (6-MSA) by the polyketide synthase macA. 6-MSA is then converted to m-cresol by the decarboxylase macB. The cytochrome P450 monooxygenase macC then catalyzes the oxidation of m-cresol to toluquinol. Epoxidation of toluquinol is then performed by the short chain dehydrogenase macD, with the help of macE, and a further prenylation by macG leads to 7-deacetoxyyanuthone A. The next step is the hydroxylation of C-22 of 7-deacetoxyyanuthone A by the cytochrome P450 monooxygenase macH to yield 22-deacetylyanuthone A. O-Mevalon transferase macI then attaches mevalon to the hydroxyl group of 22-deacetylyanuthone A to produce yanuthone E. The terpene cyclase macJ catalyzes the cyclization of 22-deacetylyanuthone A to macrophorin A. MacJ is also able to catalyze cyclization of yanuthone E and 7-deacetoxyyanuthone A to their corresponding macrophorins. The macJ products can be further modified by macH and macJ, as well as by the FAD-dependent monooxygenase macF, to produce additional macrophorins, including 4'-oxomacrophorin A, 4'-oxomacrophorin D and 4'-oxomacrophorin E. This Penicillium terrestre protein is Oxidoreductase macE.